Reading from the N-terminus, the 212-residue chain is Putative tyrosine-protein phosphatase R622 (212 aa).

The 183-residue stretch at 9 to 191 (KISQVTNNIF…LQGYQSKKEN (183 aa)) folds into the Tyrosine-protein phosphatase domain. Residue Cys-135 is the Phosphocysteine intermediate of the active site.

Belongs to the protein-tyrosine phosphatase family. Non-receptor class dual specificity subfamily.

The catalysed reaction is O-phospho-L-tyrosyl-[protein] + H2O = L-tyrosyl-[protein] + phosphate. In Acanthamoeba polyphaga mimivirus (APMV), this protein is Putative tyrosine-protein phosphatase R622.